The primary structure comprises 307 residues: Mitochondrial glycine transporter YMC1 (307 aa).

Solcar repeat units follow at residues 26–106 (VKDL…MKRF), 121–204 (PQYY…LIAN), and 218–305 (PAWK…AMRL). 6 helical membrane passes run 29–49 (LLAG…FDTT), 83–103 (LTPL…NEAM), 118–138 (LSLP…SFLA), 183–203 (TILR…ALIA), 223–243 (CIFG…LDVI), and 277–298 (FFKG…TFAT).

Belongs to the mitochondrial carrier (TC 2.A.29) family.

It localises to the mitochondrion inner membrane. In terms of biological role, secondary mitochondrial glycine transporter required for the biosynthesis of heme at high glycine concentrations. Imports the precursor glycine into the mitochondrial matrix, where it is condensed with succinyl-CoA to produce 5-aminolevulinate (ALA), the first step of heme biosynthesis. This is Mitochondrial glycine transporter YMC1 from Saccharomyces cerevisiae (strain ATCC 204508 / S288c) (Baker's yeast).